The sequence spans 123 residues: Ragulator complex protein LAMTOR3-B (123 aa).

This sequence belongs to the LAMTOR3 family. As to quaternary structure, part of the Ragulator complex composed of lamtor1, lamtor2, lamtor3, lamtor4 and lamtor5. The Ragulator complex interacts with slc38a9; the probable amino acid sensor. Component of the lysosomal folliculin complex (LFC).

It is found in the late endosome membrane. Functionally, as part of the Ragulator complex it is involved in amino acid sensing and activation of mTORC1, a signaling complex promoting cell growth in response to growth factors, energy levels, and amino acids. Activated by amino acids through a mechanism involving the lysosomal V-ATPase, the Ragulator plays a dual role for the small GTPases Rag (RagA/RRAGA, RagB/RRAGB, RagC/RRAGC and/or RagD/RRAGD): it (1) acts as a guanine nucleotide exchange factor (GEF), activating the small GTPases Rag and (2) mediates recruitment of Rag GTPases to the lysosome membrane. Activated Ragulator and Rag GTPases function as a scaffold recruiting mTORC1 to lysosomes where it is in turn activated. This Xenopus laevis (African clawed frog) protein is Ragulator complex protein LAMTOR3-B (lamtor3-b).